The primary structure comprises 82 residues: Small ribosomal subunit protein bS16 (82 aa).

The protein belongs to the bacterial ribosomal protein bS16 family.

The sequence is that of Small ribosomal subunit protein bS16 from Desulfosudis oleivorans (strain DSM 6200 / JCM 39069 / Hxd3) (Desulfococcus oleovorans).